Here is a 132-residue protein sequence, read N- to C-terminus: Large ribosomal subunit protein uL14 (132 aa).

This sequence belongs to the universal ribosomal protein uL14 family. As to quaternary structure, part of the 50S ribosomal subunit. Forms a cluster with proteins L3 and L24e, part of which may contact the 16S rRNA in 2 intersubunit bridges.

In terms of biological role, binds to 23S rRNA. Forms part of two intersubunit bridges in the 70S ribosome. The protein is Large ribosomal subunit protein uL14 of Halorubrum lacusprofundi (strain ATCC 49239 / DSM 5036 / JCM 8891 / ACAM 34).